The following is a 270-amino-acid chain: Oxidoreductase NAD-binding domain-containing protein 1 (270 aa).

The region spanning 20-123 is the FAD-binding FR-type domain; the sequence is MELFSARVCD…VGGNFYFDPQ (104 aa). Residue 137 to 142 participates in NAD(+) binding; that stretch reads GVGINP.

The chain is Oxidoreductase NAD-binding domain-containing protein 1 (oxnad1) from Danio rerio (Zebrafish).